Here is a 185-residue protein sequence, read N- to C-terminus: Ribosome-recycling factor (185 aa).

This sequence belongs to the RRF family.

Its subcellular location is the cytoplasm. Responsible for the release of ribosomes from messenger RNA at the termination of protein biosynthesis. May increase the efficiency of translation by recycling ribosomes from one round of translation to another. The sequence is that of Ribosome-recycling factor from Actinobacillus pleuropneumoniae serotype 5b (strain L20).